We begin with the raw amino-acid sequence, 1025 residues long: Multidrug resistance protein MdtC (1025 aa).

12 consecutive transmembrane segments (helical) span residues 3–23 (FFAL…AITL), 333–353 (EVEQ…FLFL), 360–380 (LIPA…MYLC), 387–407 (LSLM…IVVL), 431–451 (VGFT…PLLL), 463–483 (FAVT…TLTP), 528–548 (IVGL…ITIP), 853–873 (VILI…LYES), 875–895 (VHPL…LLAL), 897–917 (LFDA…IGIV), 953–973 (PIMM…ISSG), and 984–1004 (ITIV…TPVV).

This sequence belongs to the resistance-nodulation-cell division (RND) (TC 2.A.6) family. MdtC subfamily. As to quaternary structure, part of a tripartite efflux system composed of MdtA, MdtB and MdtC. MdtC forms a heteromultimer with MdtB.

The protein localises to the cell inner membrane. In Enterobacter sp. (strain 638), this protein is Multidrug resistance protein MdtC.